The sequence spans 398 residues: Argininosuccinate synthase (398 aa).

Position 8-16 (8-16 (AYSGGLDTS)) interacts with ATP. Tyr-87 contributes to the L-citrulline binding site. Gly-117 is an ATP binding site. The L-aspartate site is built by Thr-119, Asn-123, and Asp-124. L-citrulline is bound at residue Asn-123. L-citrulline-binding residues include Arg-127, Ser-175, Glu-259, and Tyr-271.

This sequence belongs to the argininosuccinate synthase family. Type 1 subfamily. In terms of assembly, homotetramer.

Its subcellular location is the cytoplasm. It carries out the reaction L-citrulline + L-aspartate + ATP = 2-(N(omega)-L-arginino)succinate + AMP + diphosphate + H(+). It participates in amino-acid biosynthesis; L-arginine biosynthesis; L-arginine from L-ornithine and carbamoyl phosphate: step 2/3. The polypeptide is Argininosuccinate synthase (Corynebacterium kroppenstedtii (strain DSM 44385 / JCM 11950 / CIP 105744 / CCUG 35717)).